The following is a 116-amino-acid chain: Beta-2-microglobulin (116 aa).

Residues 1–19 (MRAIITFALFCVLYVTVQG) form the signal peptide. The 87-residue stretch at 24-110 (PKVQVYSHFP…VRHMNNKNIY (87 aa)) folds into the Ig-like C1-type domain. Cysteines 44 and 99 form a disulfide.

This sequence belongs to the beta-2-microglobulin family. Heterodimer of an alpha chain and a beta chain. Beta-2-microglobulin is the beta-chain of major histocompatibility complex class I molecules.

Its subcellular location is the secreted. In terms of biological role, component of the class I major histocompatibility complex (MHC). Involved in the presentation of peptide antigens to the immune system. This chain is Beta-2-microglobulin (b2m), found in Cyprinus carpio (Common carp).